The following is a 1115-amino-acid chain: Gamma tubulin complex adapter mto1 (1115 aa).

The segment at 25–180 (LTDEEVRRIL…NYISSSLDQL (156 aa)) is disordered. Basic and acidic residues-rich tracts occupy residues 28–41 (EEVR…KEGS) and 56–71 (EASH…DSLK). 3 stretches are compositionally biased toward polar residues: residues 72 to 102 (SDSG…VNKL), 119 to 130 (DTTNFDRLNDNI), and 139 to 151 (PVLT…QSQE). S94 is modified (phosphoserine). Low complexity predominate over residues 165–176 (SDPSSPNYISSS). The stretch at 445 to 915 (NEALLLRKQE…ERNSLIKNIV (471 aa)) forms a coiled coil. Positions 523-537 (LMRMEQQWREDVDQL) are required for interaction with mto2. Polar residues predominate over residues 1001-1011 (GSTSSIPNSPR). Disordered regions lie at residues 1001–1037 (GSTS…AVQR) and 1067–1115 (EQEG…QEHK). Residues S1005 and S1009 each carry the phosphoserine modification. 2 stretches are compositionally biased toward basic and acidic residues: residues 1016–1025 (VSLDSEDKKL) and 1067–1084 (EQEG…RLQD). Positions 1072-1102 (KRDKLGARERLQDLIRQNRSLSRQIKTDKES) form a coiled coil. 2 stretches are compositionally biased toward polar residues: residues 1086 to 1095 (IRQNRSLSRQ) and 1104 to 1115 (SRSPSISSQEHK).

As to quaternary structure, interacts with mto2; the interaction is direct and required for efficient binding to the gamma-tubulin complex. Interacts with gamma tubulin complex subunits alp4, alp6 and gtb1. Interacts with mcp6.

The protein localises to the cytoplasm. It localises to the cytoskeleton. It is found in the microtubule organizing center. The protein resides in the spindle pole body. Its function is as follows. Spindle pole body (SPB) component that acts as the gamma-tubulin complex-binding protein of the SPB outer plaque. Promotes nucleation of all cytoplasmic microtubules by recruiting the gamma-tubulin complex to the spindle pole body (SPB), to the interphase microtubule organizing center (iMTOC), and to the equatorial MTOC (eMTOC) during anaphase. The chain is Gamma tubulin complex adapter mto1 from Schizosaccharomyces pombe (strain 972 / ATCC 24843) (Fission yeast).